A 236-amino-acid chain; its full sequence is 7-cyano-7-deazaguanine synthase (236 aa).

7-17 (CSGGLDSVSLA) contributes to the ATP binding site. Positions 185, 193, 196, and 199 each coordinate Zn(2+).

The protein belongs to the QueC family. Requires Zn(2+) as cofactor.

The catalysed reaction is 7-carboxy-7-deazaguanine + NH4(+) + ATP = 7-cyano-7-deazaguanine + ADP + phosphate + H2O + H(+). The protein operates within purine metabolism; 7-cyano-7-deazaguanine biosynthesis. Its function is as follows. Catalyzes the ATP-dependent conversion of 7-carboxy-7-deazaguanine (CDG) to 7-cyano-7-deazaguanine (preQ(0)). The sequence is that of 7-cyano-7-deazaguanine synthase from Rhizobium rhizogenes (strain K84 / ATCC BAA-868) (Agrobacterium radiobacter).